Reading from the N-terminus, the 336-residue chain is MLGYILWTSLYVLLIVIPLILVVAYYTYAERKVIGYMQDRIGPNRVGSFGLLQPIFDALKLFLKEIIVPTNSNRYLFFIAPILAFAPAYAAWAVIPFSKGVVLSDMNLGLLYILAMTSFSIYGIVIAGWASNSKYSLFGALRAGAQVISYELAMGFAIVGVVIAAGSMGITGIIEAQSGGIWHWYFIPLFPLFIVYFIAGIAETNRAPFDVVEGESEIVAGHHIEYTGSRFALFFLAEYANMILISILTSIMFLGGWNSPFQATALESIFGFVPGVVWLFAKTGIFMFMFLWVRATYPRYRYDQIMRLGWKIFIPLTFVWVVIVACMVRLGVGPWW.

8 consecutive transmembrane segments (helical) span residues 4-24 (YILW…LVVA), 75-95 (YLFF…WAVI), 108-128 (LGLL…VIAG), 154-174 (MGFA…TGII), 181-201 (IWHW…IAGI), 233-253 (LFFL…SIMF), 272-292 (FVPG…MFLW), and 308-328 (LGWK…ACMV).

This sequence belongs to the complex I subunit 1 family. NDH-1 is composed of 14 different subunits. Subunits NuoA, H, J, K, L, M, N constitute the membrane sector of the complex.

It is found in the cell inner membrane. The enzyme catalyses a quinone + NADH + 5 H(+)(in) = a quinol + NAD(+) + 4 H(+)(out). Its function is as follows. NDH-1 shuttles electrons from NADH, via FMN and iron-sulfur (Fe-S) centers, to quinones in the respiratory chain. The immediate electron acceptor for the enzyme in this species is believed to be ubiquinone. Couples the redox reaction to proton translocation (for every two electrons transferred, four hydrogen ions are translocated across the cytoplasmic membrane), and thus conserves the redox energy in a proton gradient. This subunit may bind ubiquinone. The polypeptide is NADH-quinone oxidoreductase subunit H (Francisella tularensis subsp. tularensis (strain FSC 198)).